Reading from the N-terminus, the 1030-residue chain is MAGTDPRNRELSLMDKQISSLLEICLNSNLYSINLHCNQISKIEGLRHLCYLQHLDLSSNLITKIEGLDSLASLQSLNLSCNKLTRVEGLEKLFNLKKLNLSYNSIQDLTGLIPLHGWNHKLSHLYLHSNCINSIDEVLQSTVGLNCLLHLTLEQNAKGNPVCHALGYREIILENLPQLNSLDGLDRSGDPVTAHEVDSMDLANLDFLEYLITFDSGRKEVKESLTGPVKTARIDEVLTKYRKHRDSSEAINLNTDGTSSSEHDVVRFQDNSNMLREMRIKKLEDQISELLVKASCPKSEQTKLKAKRDTDITTESDSESTKENRKGSTTKRTPGCHKTSQTSKQQANQQLKGRTSYSELKQNVSRKQSLSKRKTDIETSLSSGRTDTDSTGQILGKPHAIGGSLKKKGELVRNSIEESTYRALVQELDQERERRWKAEQVVLKLTENIKELQSQAKEEKGINSMAVYTTDRIKELLLKEKNAKSKLQELIHHLREENEKLMDELKKLKCKEEDYQKAYKSMEDTLAKLETQNIQKQALEMKQVQETERKVSASQREIDLLRVALRQQKEKVNQLHEVLTSKEQLHRKELESRVALNGPEFQYALAQEMAKEEHHHSQQIHSFQEKINLLTQQYADLEDEFRAALIIEAERFKEVKDGFDNVASELAEHKETVHRCRQKEKQSATLMQELTTMVKEQKARIAEITKAKQEIISDLKSKIHSLEKVAEEGRQKTVQTELLKKEKSKLISQLTAQESLIDGLKAERKIWGQELTQQGVSLAQDRGRLEAKIEVLSNEIESLKKQNERDADALRIKTKIVDDQTETIRKLKEGLQERDERIRKLREENIELEKVLQEQSDERTAQLEELKQKLERQTERKEEVKQLLEEKEAELEDVKKAYSAMNKKWQDKAELLSHLETQVRQMKENFDAKENKLIEERDKSLQCQKVITEKLRSVDDAFRRQLESVLSAHQAELIKLASDKQKEIEAANERVYQVEEEMRHLLKETANSKKIMEEKIKRLTGALSDIQKEF.

LRR repeat units lie at residues 7–28 (RNRELSLMDKQISSLLEICLNS), 29–50 (NLYSINLHCNQISKIEGLRHLC), 51–72 (YLQHLDLSSNLITKIEGLDSLA), 73–94 (SLQSLNLSCNKLTRVEGLEKLF), 95–116 (NLKKLNLSYNSIQDLTGLIPLH), and 121–142 (KLSHLYLHSNCINSIDEVLQST). The region spanning 160 to 200 (NPVCHALGYREIILENLPQLNSLDGLDRSGDPVTAHEVDSM) is the LRRCT domain. The interval 298–401 (KSEQTKLKAK…GQILGKPHAI (104 aa)) is disordered. The segment covering 300-311 (EQTKLKAKRDTD) has biased composition (basic and acidic residues). Polar residues-rich tracts occupy residues 338–368 (KTSQTSKQQANQQLKGRTSYSELKQNVSRKQ) and 378–393 (ETSLSSGRTDTDSTGQ). Residues 432 to 645 (RERRWKAEQV…DLEDEFRAAL (214 aa)) are a coiled coil.

This sequence belongs to the LRRCC1 family.

The protein localises to the cytoplasm. It is found in the cytoskeleton. Its subcellular location is the microtubule organizing center. It localises to the centrosome. The protein resides in the centriole. Its function is as follows. Required for the organization of the mitotic spindle. Maintains the structural integrity of centrosomes during mitosis. This chain is Leucine-rich repeat and coiled-coil domain-containing protein 1 (lrrcc1), found in Xenopus laevis (African clawed frog).